Consider the following 120-residue polypeptide: NAD(P)H-quinone oxidoreductase subunit 3 (120 aa).

3 helical membrane-spanning segments follow: residues 1-21, 64-84, and 89-109; these read MFVL…SLVP, MFAL…PWAV, and LGLL…VALV.

Belongs to the complex I subunit 3 family. In terms of assembly, NDH-1 can be composed of about 15 different subunits; different subcomplexes with different compositions have been identified which probably have different functions.

It localises to the cellular thylakoid membrane. It catalyses the reaction a plastoquinone + NADH + (n+1) H(+)(in) = a plastoquinol + NAD(+) + n H(+)(out). It carries out the reaction a plastoquinone + NADPH + (n+1) H(+)(in) = a plastoquinol + NADP(+) + n H(+)(out). NDH-1 shuttles electrons from an unknown electron donor, via FMN and iron-sulfur (Fe-S) centers, to quinones in the respiratory and/or the photosynthetic chain. The immediate electron acceptor for the enzyme in this species is believed to be plastoquinone. Couples the redox reaction to proton translocation, and thus conserves the redox energy in a proton gradient. Cyanobacterial NDH-1 also plays a role in inorganic carbon-concentration. This Nostoc punctiforme (strain ATCC 29133 / PCC 73102) protein is NAD(P)H-quinone oxidoreductase subunit 3.